A 222-amino-acid polypeptide reads, in one-letter code: Chalcone--flavanone isomerase 1 (222 aa).

Substrate is bound by residues T48, N113, and T190.

The protein belongs to the chalcone isomerase family.

The catalysed reaction is a chalcone = a flavanone.. It functions in the pathway secondary metabolite biosynthesis; flavonoid biosynthesis. Its function is as follows. Catalyzes the intramolecular cyclization of bicyclic chalcones into tricyclic (S)-flavanones. Responsible for the isomerization of 4,2',4',6'-tetrahydroxychalcone (also termed chalcone) into naringenin. In Medicago sativa (Alfalfa), this protein is Chalcone--flavanone isomerase 1 (CHI1).